The chain runs to 45 residues: Metallothionein-like protein 1A (45 aa).

Belongs to the metallothionein superfamily. Type 15 family. As to expression, expressed in phloem and mesophyll cells of leaves, vascular tissues of cotyledons, sepals and petals. Expressed in anthers. Expressed in root endodermis and at lower levels in cortex of mature region of roots.

Its function is as follows. Metallothioneins have a high content of cysteine residues that bind various heavy metals. Functions as a metal chelator of copper (Cu) and zinc (Zn). Plays a role in Cu homeostasis in the roots under elevated Cu concentration. Functions cooperatively with the phytochelatin synthase PCS1 to protect plants from Cu and cadmium (Cd) toxicity. Plays a role in Cu homeostasis, specifically in the remobilization of Cu from senescing leaves. The mobilization of Cu from internal sources is important for seed development. Confers tolerance to Cd and plays a role in Cd and Zn homeostasis. In Arabidopsis thaliana (Mouse-ear cress), this protein is Metallothionein-like protein 1A (MT1A).